The primary structure comprises 257 residues: 3-deoxy-manno-octulosonate cytidylyltransferase (257 aa).

The protein belongs to the KdsB family.

It localises to the cytoplasm. It carries out the reaction 3-deoxy-alpha-D-manno-oct-2-ulosonate + CTP = CMP-3-deoxy-beta-D-manno-octulosonate + diphosphate. The protein operates within nucleotide-sugar biosynthesis; CMP-3-deoxy-D-manno-octulosonate biosynthesis; CMP-3-deoxy-D-manno-octulosonate from 3-deoxy-D-manno-octulosonate and CTP: step 1/1. Its pathway is bacterial outer membrane biogenesis; lipopolysaccharide biosynthesis. Its function is as follows. Activates KDO (a required 8-carbon sugar) for incorporation into bacterial lipopolysaccharide in Gram-negative bacteria. The protein is 3-deoxy-manno-octulosonate cytidylyltransferase of Xylella fastidiosa (strain 9a5c).